We begin with the raw amino-acid sequence, 285 residues long: V-set and transmembrane domain-containing protein 2B (285 aa).

The signal sequence occupies residues 1–28 (MEQRNRLGALGYLLPLLLHSLLLFVADA). Positions 29-143 (TFTEVPKDVT…DDDTQEHKAQ (115 aa)) constitute an Ig-like V-type domain. The Extracellular segment spans residues 29–263 (TFTEVPKDVT…HGSGTGPGYS (235 aa)). Cysteines 49 and 127 form a disulfide. The disordered stretch occupies residues 160–225 (AEAVSHIQSS…AAAAAASATH (66 aa)). Composition is skewed to low complexity over residues 176–189 (ASSA…GAAV) and 208–225 (PAGS…SATH). Residues 264-284 (ADPLLSLLLLALHKFLHPLLG) traverse the membrane as a helical segment. Residue histidine 285 is a topological domain, cytoplasmic.

Its subcellular location is the membrane. The protein is V-set and transmembrane domain-containing protein 2B (Vstm2b) of Mus musculus (Mouse).